The sequence spans 505 residues: Glutamate--tRNA ligase (505 aa).

The short motif at 12 to 22 (PSPTGDPHVGT) is the 'HIGH' region element. A 'KMSKS' region motif is present at residues 253–257 (KLSKR). Lys-256 serves as a coordination point for ATP.

It belongs to the class-I aminoacyl-tRNA synthetase family. Glutamate--tRNA ligase type 1 subfamily. Monomer.

Its subcellular location is the cytoplasm. It carries out the reaction tRNA(Glu) + L-glutamate + ATP = L-glutamyl-tRNA(Glu) + AMP + diphosphate. Its function is as follows. Catalyzes the attachment of glutamate to tRNA(Glu) in a two-step reaction: glutamate is first activated by ATP to form Glu-AMP and then transferred to the acceptor end of tRNA(Glu). This chain is Glutamate--tRNA ligase, found in Chlamydia pneumoniae (Chlamydophila pneumoniae).